Consider the following 744-residue polypeptide: Phosphoribosylformylglycinamidine synthase subunit PurL (744 aa).

The active site involves His-50. The ATP site is built by Tyr-53 and Lys-92. A Mg(2+)-binding site is contributed by Glu-94. Substrate is bound by residues 95-98 (SHNH) and Arg-117. His-96 acts as the Proton acceptor in catalysis. Position 118 (Asp-118) interacts with Mg(2+). Position 241 (Gln-241) interacts with substrate. Asp-269 lines the Mg(2+) pocket. Position 313 to 315 (313 to 315 (ESQ)) interacts with substrate. 2 residues coordinate ATP: Asp-495 and Gly-532. Mg(2+) is bound at residue Asn-533. Residue Ser-535 coordinates substrate.

Belongs to the FGAMS family. Monomer. Part of the FGAM synthase complex composed of 1 PurL, 1 PurQ and 2 PurS subunits.

It is found in the cytoplasm. It catalyses the reaction N(2)-formyl-N(1)-(5-phospho-beta-D-ribosyl)glycinamide + L-glutamine + ATP + H2O = 2-formamido-N(1)-(5-O-phospho-beta-D-ribosyl)acetamidine + L-glutamate + ADP + phosphate + H(+). It participates in purine metabolism; IMP biosynthesis via de novo pathway; 5-amino-1-(5-phospho-D-ribosyl)imidazole from N(2)-formyl-N(1)-(5-phospho-D-ribosyl)glycinamide: step 1/2. Functionally, part of the phosphoribosylformylglycinamidine synthase complex involved in the purines biosynthetic pathway. Catalyzes the ATP-dependent conversion of formylglycinamide ribonucleotide (FGAR) and glutamine to yield formylglycinamidine ribonucleotide (FGAM) and glutamate. The FGAM synthase complex is composed of three subunits. PurQ produces an ammonia molecule by converting glutamine to glutamate. PurL transfers the ammonia molecule to FGAR to form FGAM in an ATP-dependent manner. PurS interacts with PurQ and PurL and is thought to assist in the transfer of the ammonia molecule from PurQ to PurL. This chain is Phosphoribosylformylglycinamidine synthase subunit PurL, found in Rhizobium johnstonii (strain DSM 114642 / LMG 32736 / 3841) (Rhizobium leguminosarum bv. viciae).